Here is a 671-residue protein sequence, read N- to C-terminus: Putative protein kinase C delta type homolog (671 aa).

Residues 1–136 (MMFTRAQVRK…ITNRRGAIKH (136 aa)) form a disordered region. The segment covering 14–27 (SNSSSQRPRSSGGS) has biased composition (low complexity). Basic and acidic residues predominate over residues 57–101 (ARRDQYRDRDHYGKHSFELPRQHSKEEAYHRDRESSAGGVDRGER). A compositionally biased stretch (gly residues) spans 102–116 (SGIGGNGGGVTGGGV). 2 Phorbol-ester/DAG-type zinc fingers span residues 144–194 (GHRF…LGKC) and 216–266 (PHRF…ANLC). Residues 343 to 601 (FHFLAVLGKG…AGDIADHIFF (259 aa)) form the Protein kinase domain. ATP contacts are provided by residues 349-357 (LGKGSFGKV) and K372. The active-site Proton acceptor is the D467. The AGC-kinase C-terminal domain occupies 602-671 (RPIDWGLLEK…TYTNPHITLD (70 aa)).

The protein belongs to the protein kinase superfamily. AGC Ser/Thr protein kinase family. PKC subfamily.

It catalyses the reaction L-seryl-[protein] + ATP = O-phospho-L-seryl-[protein] + ADP + H(+). The enzyme catalyses L-threonyl-[protein] + ATP = O-phospho-L-threonyl-[protein] + ADP + H(+). The protein is Putative protein kinase C delta type homolog of Drosophila melanogaster (Fruit fly).